The primary structure comprises 128 residues: L-ectoine synthase (128 aa).

Belongs to the ectoine synthase family.

The catalysed reaction is (2S)-4-acetamido-2-aminobutanoate = L-ectoine + H2O. Its pathway is amine and polyamine biosynthesis; ectoine biosynthesis; L-ectoine from L-aspartate 4-semialdehyde: step 3/3. Catalyzes the circularization of gamma-N-acetyl-alpha,gamma-diaminobutyric acid (ADABA) to ectoine (1,4,5,6-tetrahydro-2-methyl-4-pyrimidine carboxylic acid), which is an excellent osmoprotectant. The chain is L-ectoine synthase from Virgibacillus pantothenticus.